Here is a 91-residue protein sequence, read N- to C-terminus: Salivary lectin pathway inhibitor (91 aa).

Positions Met-1–Ala-21 are cleaved as a signal peptide. N-linked (GlcNAc...) asparagine glycans are attached at residues Asn-26 and Asn-87.

Belongs to the salp14 family. Glycosylated; deglycosylation largely abrogates the complement inhibitory effect. Nymph salivary gland (at protein level). Saliva (at protein level). Not detected in midgut.

The protein resides in the secreted. Inhibits the lectin pathway of complement system activation in the host by reducing binding of mannose-binding lectin and L-ficolin to their ligands. Does not affect the classical and alternative pathways of complement system activation in the host. In terms of biological role, (Microbial infection) Protects Borrelia garinii (strain A87S) from host complement-mediated killing by preventing deposition of host C5b-9 membrane attack complexes on the surface of spirochetes. Inhibits phagocytosis of B.garinii (strain A87S) by human neutrophils. Impairs Borrelia-induced complement-mediated chemotaxis of human polymorphonuclear leukocytes. Functionally, (Microbial infection) Protects Borrelia burgdorferi (strain N40), which is resistant to normal human serum, from Borrelia-opsonizing antibody-mediated complement-dependent killing. This is Salivary lectin pathway inhibitor from Ixodes scapularis (Black-legged tick).